Consider the following 495-residue polypeptide: Cobyric acid synthase (495 aa).

The GATase cobBQ-type domain maps to 249-442 (KFIVKVPVVT…LHGVFDEPEA (194 aa)). Catalysis depends on cysteine 330, which acts as the Nucleophile. The active site involves histidine 434.

The protein belongs to the CobB/CobQ family. CobQ subfamily.

Its pathway is cofactor biosynthesis; adenosylcobalamin biosynthesis. Catalyzes amidations at positions B, D, E, and G on adenosylcobyrinic A,C-diamide. NH(2) groups are provided by glutamine, and one molecule of ATP is hydrogenolyzed for each amidation. The chain is Cobyric acid synthase from Aliivibrio fischeri (strain ATCC 700601 / ES114) (Vibrio fischeri).